A 417-amino-acid polypeptide reads, in one-letter code: MSGRMKEVVSWSPEEVTNWLMENAVPEYCEPLKSFTGQDLINLTEEDFKKTPLSRVSSDSGQQLLHMIETLKMAHHIEAHKNGHVNGHIHVSVNNTAHENGFSSKTKLNGVPNGYKKEMIKIPMPEPERLQYPMEWGKTFLAFIYALFCFIFTTVTISVVHERVPPKEVQPPLPDAFFDRFDRVQWAFSICEINGMILVGLWLVQWLLLKYKSIISRRFFCIVCTLYLYRCITMYVTTLPVPGMHFKCSPKLFGDWESHLRRIMKLIAGGGLSITGSHNMCGDYLYSGHTVILTLTYLFIKEYSPRRLWWYHWLCWTLSMVGMFCILLAHDHYTVDVVVAYYITTRLFWWYHTMANQQVLKEASQTNLLARVWWYKPFQYFEKNVQGIVPRSYHWPFPWPVLHRGRQVKYSRLVNDT.

In terms of domain architecture, SAM spans 11–74; that stretch reads WSPEEVTNWL…LHMIETLKMA (64 aa). Transmembrane regions (helical) follow at residues 140 to 160, 188 to 208, 219 to 239, 280 to 300, and 308 to 328; these read FLAFIYALFCFIFTTVTISVV, FSICEINGMILVGLWLVQWLL, FFCIVCTLYLYRCITMYVTTL, MCGDYLYSGHTVILTLTYLFI, and LWWYHWLCWTLSMVGMFCILL. The active site involves H289. The Cytoplasmic segment spans residues 329–417; that stretch reads AHDHYTVDVV…VKYSRLVNDT (89 aa). Active-site residues include H332 and D336.

Belongs to the sphingomyelin synthase family.

It is found in the golgi apparatus membrane. It carries out the reaction an N-acylsphing-4-enine + a 1,2-diacyl-sn-glycero-3-phosphocholine = a sphingomyelin + a 1,2-diacyl-sn-glycerol. It catalyses the reaction an N-acylsphing-4-enine + a 1,2-diacyl-sn-glycero-3-phosphoethanolamine = an N-acylsphing-4-enine 1-phosphoethanolamine + a 1,2-diacyl-sn-glycerol. Its function is as follows. Major sphingomyelin synthase at the Golgi apparatus. Catalyzes the reversible transfer of phosphocholine moiety in sphingomyelin biosynthesis: in the forward reaction transfers phosphocholine head group of phosphatidylcholine (PC) on to ceramide (CER) to form ceramide phosphocholine (sphingomyelin, SM) and diacylglycerol (DAG) as by-product, and in the reverse reaction transfers phosphocholine from SM to DAG to form PC and CER. The direction of the reaction depends on the levels of CER and DAG in Golgi membranes. Converts the newly synthesized CER, that is transported from the endoplasmic reticulum to the trans-Golgi by the Cer transport protein (CERT), to SM. Can form a heteromeric complex with glucosylceramide synthase (GCS) increasing SMS activity and reducing glucosylceramide synthesis, a critical mechanism that controls the metabolic fate of CER in the Golgi. Does not use free phosphorylcholine or CDP-choline as donor. Can also transfer phosphoethanolamine head group of phosphatidylethanolamine (PE) on to CER to form ceramide phosphoethanolamine (CPE). Regulates receptor-mediated signal transduction via mitogenic DAG and proapoptotic CER, as well as via SM, a structural component of membrane rafts that serve as platforms for signal transduction and protein sorting. Plays a role in secretory transport via regulation of DAG pool at the Golgi apparatus and its downstream effects on PRKD1. The sequence is that of Phosphatidylcholine:ceramide cholinephosphotransferase 1 (SGMS1) from Gallus gallus (Chicken).